A 43-amino-acid chain; its full sequence is Potassium channel toxin gamma-KTx 4.9 (43 aa).

Disulfide bonds link Cys5–Cys23, Cys11–Cys34, Cys20–Cys39, and Cys24–Cys41.

This sequence belongs to the ergtoxin family. Gamma-KTx 4 subfamily. As to expression, expressed by the venom gland.

Its subcellular location is the secreted. Reversibly blocks Kv11/ERG potassium channels. The polypeptide is Potassium channel toxin gamma-KTx 4.9 (Centruroides sculpturatus (Arizona bark scorpion)).